Here is a 389-residue protein sequence, read N- to C-terminus: Type 2 DNA topoisomerase 6 subunit A (389 aa).

Residues 12 to 162 (EARRKAANIL…MLILSKEKGK (151 aa)) form the Topo IIA-type catalytic domain. Tyr-106 serves as the catalytic O-(5'-phospho-DNA)-tyrosine intermediate. Mg(2+) is bound by residues Glu-209 and Asp-261.

The protein belongs to the TOP6A family. In terms of assembly, homodimer. Heterotetramer of two Top6A and two Top6B chains. The cofactor is Mg(2+).

It carries out the reaction ATP-dependent breakage, passage and rejoining of double-stranded DNA.. With respect to regulation, not inhibited by the DNA gyrase inhibitor novobiocin, instead inhibited by eukaryotic topoisomerase inhibitors such as m- and o-amsacrine, ellipticine, and the quinolone CP-115,953. Relaxes both positive and negative supercoils and exhibits a strong decatenase and unknotting activity; it cannot introduce DNA supercoils. ATP is absolutely required for DNA cleavage; the nonhydrolyzable analog AMP-PNP generates nicked or linear products from a supercoiled dsDNA substrate. Generates staggered two-nucleotide long 5' overhangs. The enzyme is covalently attached transiently to the 5'-ends of the cleaved strands. This is Type 2 DNA topoisomerase 6 subunit A from Saccharolobus shibatae (strain ATCC 51178 / DSM 5389 / JCM 8931 / NBRC 15437 / B12) (Sulfolobus shibatae).